The chain runs to 377 residues: S-adenosylmethionine synthase (377 aa).

Residue histidine 14 coordinates ATP. A Mg(2+)-binding site is contributed by aspartate 16. Glutamate 42 lines the K(+) pocket. Glutamine 98 provides a ligand contact to L-methionine. The flexible loop stretch occupies residues 98–108 (QSADIALGIDL). ATP is bound by residues 162-164 (DMK), 228-229 (RF), aspartate 237, 243-244 (RK), alanine 260, and lysine 264. Aspartate 237 contacts L-methionine. L-methionine is bound at residue lysine 268.

Belongs to the AdoMet synthase family. Homotetramer; dimer of dimers. The cofactor is Mg(2+). K(+) is required as a cofactor.

It is found in the cytoplasm. It catalyses the reaction L-methionine + ATP + H2O = S-adenosyl-L-methionine + phosphate + diphosphate. Its pathway is amino-acid biosynthesis; S-adenosyl-L-methionine biosynthesis; S-adenosyl-L-methionine from L-methionine: step 1/1. Its function is as follows. Catalyzes the formation of S-adenosylmethionine (AdoMet) from methionine and ATP. The overall synthetic reaction is composed of two sequential steps, AdoMet formation and the subsequent tripolyphosphate hydrolysis which occurs prior to release of AdoMet from the enzyme. This is S-adenosylmethionine synthase from Mesoplasma florum (strain ATCC 33453 / NBRC 100688 / NCTC 11704 / L1) (Acholeplasma florum).